The chain runs to 248 residues: uncharacterized protein (248 aa).

An NADP(+)-binding site is contributed by 8 to 32; that stretch reads IVTGAAQGIGQAYAQALAREGASVV. Residue S143 participates in substrate binding. Catalysis depends on Y153, which acts as the Proton acceptor.

This sequence belongs to the short-chain dehydrogenases/reductases (SDR) family.

This is an uncharacterized protein from Mycobacterium tuberculosis (strain CDC 1551 / Oshkosh).